The chain runs to 740 residues: Ion-translocating oxidoreductase complex subunit C (740 aa).

4Fe-4S ferredoxin-type domains follow at residues 369–397 (GEPQEEQSCIRCSACADACPVDLLPQQLY) and 407–436 (KATTHNIADCIECGACAWVCPSNIPLVQYF). [4Fe-4S] cluster-binding residues include C377, C380, C383, C387, C416, C419, C422, and C426. The disordered stretch occupies residues 598–716 (AKARKLEQQQ…EPEEQVDPRK (119 aa)).

Belongs to the 4Fe4S bacterial-type ferredoxin family. RnfC subfamily. As to quaternary structure, the complex is composed of six subunits: RsxA, RsxB, RsxC, RsxD, RsxE and RsxG. The cofactor is [4Fe-4S] cluster.

The protein resides in the cell inner membrane. Part of a membrane-bound complex that couples electron transfer with translocation of ions across the membrane. Required to maintain the reduced state of SoxR. The sequence is that of Ion-translocating oxidoreductase complex subunit C from Shigella flexneri serotype 5b (strain 8401).